The chain runs to 423 residues: Histidine--tRNA ligase (423 aa).

The protein belongs to the class-II aminoacyl-tRNA synthetase family. In terms of assembly, homodimer.

It localises to the cytoplasm. It carries out the reaction tRNA(His) + L-histidine + ATP = L-histidyl-tRNA(His) + AMP + diphosphate + H(+). The sequence is that of Histidine--tRNA ligase from Haemophilus influenzae (strain PittEE).